Consider the following 53-residue polypeptide: Bowman-Birk type proteinase inhibitor II-4 (53 aa).

Cystine bridges form between cysteine 8/cysteine 23, cysteine 13/cysteine 21, cysteine 30/cysteine 37, and cysteine 34/cysteine 49.

This sequence belongs to the Bowman-Birk serine protease inhibitor family.

This chain is Bowman-Birk type proteinase inhibitor II-4, found in Triticum aestivum (Wheat).